The chain runs to 520 residues: RNA-binding protein MEX3A (520 aa).

A disordered region spans residues 49–111; it reads GLGEPPAPTA…QPPTAPKGAS (63 aa). The segment covering 60–69 has biased composition (gly residues); that stretch reads EDGGGGGGGA. The span at 73–91 shows a compositional bias: pro residues; it reads PAAPPQPAPPPPPAAPPAA. KH domains follow at residues 132-193 and 223-284; these read TTEC…RREI and QVTI…REEI. At serine 338 the chain carries Phosphoserine. Residues 412–461 are disordered; the sequence is SSSSAKARAGPPGAHRSPATSAGPELAGLPRRPPGEPLQGFSKLGGGGLR. The residue at position 462 (serine 462) is a Phosphoserine. The RING-type zinc finger occupies 469-509; sequence CMVCFESEVTAALVPCGHNLFCMECAVRICERTDPECPVCH.

In terms of processing, phosphorylated. In terms of tissue distribution, highest levels found in fetal brain and testis. Detected also in thymus, salivary gland and uterus.

The protein localises to the cytoplasm. The protein resides in the nucleus. It localises to the P-body. Functionally, RNA binding protein, may be involved in post-transcriptional regulatory mechanisms. The protein is RNA-binding protein MEX3A (MEX3A) of Homo sapiens (Human).